Consider the following 195-residue polypeptide: Imidazoleglycerol-phosphate dehydratase (195 aa).

This sequence belongs to the imidazoleglycerol-phosphate dehydratase family.

It is found in the cytoplasm. It catalyses the reaction D-erythro-1-(imidazol-4-yl)glycerol 3-phosphate = 3-(imidazol-4-yl)-2-oxopropyl phosphate + H2O. It functions in the pathway amino-acid biosynthesis; L-histidine biosynthesis; L-histidine from 5-phospho-alpha-D-ribose 1-diphosphate: step 6/9. This chain is Imidazoleglycerol-phosphate dehydratase, found in Acetivibrio thermocellus (strain ATCC 27405 / DSM 1237 / JCM 9322 / NBRC 103400 / NCIMB 10682 / NRRL B-4536 / VPI 7372) (Clostridium thermocellum).